The chain runs to 297 residues: Oxidoreductase R1 (297 aa).

Belongs to the asaB hydroxylase/desaturase family.

The protein operates within secondary metabolite biosynthesis. Its function is as follows. Oxidoreductase; part of the gene cluster that mediates the biosynthesis of squalestatin S1 (SQS1, also known as zaragozic acid A), a heavily oxidized fungal polyketide that offers potent cholesterol lowering activity by targeting squalene synthase (SS). SQS1 is composed of a 2,8-dioxobicyclic[3.2.1]octane-3,4,5-tricarboxyclic acid core that is connected to two lipophilic polyketide arms. These initial steps feature the priming of an unusual benzoic acid starter unit onto the highly reducing polyketide synthase pks2, followed by oxaloacetate extension and product release to generate a tricarboxylic acid containing product. The phenylalanine ammonia lyase (PAL) M7 and the acyl-CoA ligase M9 are involved in transforming phenylalanine into benzoyl-CoA. The citrate synthase-like protein R3 is involved in connecting the C-alpha-carbons of the hexaketide chain and oxaloacetate to afford the tricarboxylic acid unit. The potential hydrolytic enzymes, M8 and M10, are in close proximity to pks2 and may participate in product release. On the other side, the tetraketide arm is synthesized by a the squalestatin tetraketide synthase pks1 and enzymatically esterified to the core in the last biosynthetic step, by the acetyltransferase M4. The biosynthesis of the tetraketide must involve 3 rounds of chain extension. After the first and second rounds methyl-transfer occurs, and in all rounds of extension the ketoreductase and dehydratase are active. The enoyl reductase and C-MeT of pks1 are not active in the final round of extension. The acetyltransferase M4 appears to have a broad substrate selectivity for its acyl CoA substrate, allowing the in vitro synthesis of novel squalestatins. The biosynthesis of SQS1 requires several oxidative steps likely performed by oxidoreductases M1, R1 and R2. Finally, in support of the identification of the cluster as being responsible for SQS1 production, the cluster contains a gene encoding a putative squalene synthase (SS) R6, suggesting a likely mechanism for self-resistance. The protein is Oxidoreductase R1 of Phoma sp. (strain ATCC 20986 / MF5453).